The sequence spans 150 residues: UPF0260 protein PP_4587 (150 aa).

Belongs to the UPF0260 family.

This chain is UPF0260 protein PP_4587, found in Pseudomonas putida (strain ATCC 47054 / DSM 6125 / CFBP 8728 / NCIMB 11950 / KT2440).